Here is a 324-residue protein sequence, read N- to C-terminus: DNA repair and recombination protein RadA (324 aa).

114-121 (GEFGSGKT) provides a ligand contact to ATP.

Belongs to the eukaryotic RecA-like protein family.

Involved in DNA repair and in homologous recombination. Binds and assemble on single-stranded DNA to form a nucleoprotein filament. Hydrolyzes ATP in a ssDNA-dependent manner and promotes DNA strand exchange between homologous DNA molecules. The polypeptide is DNA repair and recombination protein RadA (Sulfurisphaera tokodaii (strain DSM 16993 / JCM 10545 / NBRC 100140 / 7) (Sulfolobus tokodaii)).